Reading from the N-terminus, the 88-residue chain is EMBRYO SURROUNDING FACTOR 1-like protein 3 (88 aa).

The first 22 residues, 1–22, serve as a signal peptide directing secretion; the sequence is MKLSQIALICIVIASLFAMHEC. 3 disulfide bridges follow: Cys41/Cys56, Cys54/Cys80, and Cys57/Cys67.

This sequence belongs to the MEG family. As to expression, expressed in stems, leaves and flowers.

This chain is EMBRYO SURROUNDING FACTOR 1-like protein 3 (ESFL3), found in Arabidopsis thaliana (Mouse-ear cress).